The following is a 475-amino-acid chain: 3-hydroxyacyl-CoA dehydrogenase-like protein LAM1 (475 aa).

Residue 99–104 (GTRPFA) coordinates NAD(+). Residue Lys149 coordinates CoA. Asn245 lines the NAD(+) pocket.

This sequence belongs to the 3-hydroxyacyl-CoA dehydrogenase family.

It functions in the pathway mycotoxin biosynthesis. Functionally, 3-hydroxyacyl-CoA dehydrogenase-like protein; part of the Tox1A locus, one of the 2 loci that mediate the biosynthesis of T-toxin, a family of linear polyketides 37 to 45 carbons in length, of which the major component is 41 carbons, and which leads to high virulence to maize. One of the PKSs (PKS1 or PKS2) could synthesize a precursor, used subsequently by the other PKS as starter unit, to add additional carbons. Variability in the length of the final carbon backbone C35-47 could be achieved by varying the number of condensation cycles, or use of different starter or extender units or might be due to decarboxylation of the penultimate product, catalyzed by DEC1. Additional proteins are required for the biosynthesis of T-toxin, including oxidoreductases RED1, RED2, RED3, LAM1 and OXI1, as well as esterase TOX9. This Cochliobolus heterostrophus (strain C4 / ATCC 48331 / race T) (Southern corn leaf blight fungus) protein is 3-hydroxyacyl-CoA dehydrogenase-like protein LAM1.